We begin with the raw amino-acid sequence, 137 residues long: Putative pre-16S rRNA nuclease (137 aa).

This sequence belongs to the YqgF nuclease family.

The protein resides in the cytoplasm. Its function is as follows. Could be a nuclease involved in processing of the 5'-end of pre-16S rRNA. The chain is Putative pre-16S rRNA nuclease from Flavobacterium psychrophilum (strain ATCC 49511 / DSM 21280 / CIP 103535 / JIP02/86).